A 478-amino-acid chain; its full sequence is Cytochrome P450 family 716 subfamily AD polypeptide 4 (478 aa).

A helical membrane pass occupies residues Met-1–Phe-21. Cys-425 provides a ligand contact to heme.

The protein belongs to the cytochrome P450 family. It depends on heme as a cofactor. In terms of tissue distribution, mainly expressed in petioles and, to a lower extent, in roots.

It localises to the membrane. The catalysed reaction is (1S,3bR,4R,5aR,9aR,9bR,11aS)-1-[(4R)-5-[(2S)-3,3-dimethyloxiran-2-yl]-1,4-dihydroxybutan-2-yl]-3b,6,6,9a,11a-pentamethyl-7-oxo-1H,2H,3bH,4H,5H,5aH,6H,7H,9aH,9bH,10H,11H,11aH-cyclopenta[a]phenanthren-4-yl acetate + reduced [NADPH--hemoprotein reductase] + O2 = (1S,3bR,4R,5aR,9aR,9bR,11aS)-1-(1-hydroxy-4-oxobutan-2-yl)-3b,6,6,9a,11a-pentamethyl-7-oxo-1H,2H,3bH,4H,5H,5aH,6H,7H,9aH,9bH,10H,11H,11aH-cyclopenta[a]phenanthren-4-yl acetate + 2-methylpropanoate + oxidized [NADPH--hemoprotein reductase] + H2O + 2 H(+). It participates in secondary metabolite biosynthesis; terpenoid biosynthesis. In terms of biological role, monooxygenase involved in the biosynthesis of limonoids triterpene natural products such as azadirachtin, an antifeedant widely used as bioinsecticide, and possessing many medicinal applications including anti-tumoral, anti-malarial, anti-rheumatic, antibacterial, anti-inflammatory, anti-pyretic and diuretic effects. Catalyzes the formation of (1S,3bR,4R,5aR,9aR,9bR,11aS)-1-(1-hydroxy-4-oxobutan-2-yl)-3b,6,6,9a,11a-pentamethyl-7-oxo-1H,2H,3bH,4H,5H,5aH,6H,7H,9aH,9bH,10H,11H,11aH-cyclopenta[a]phenanthren-4-yl acetate. This chain is Cytochrome P450 family 716 subfamily AD polypeptide 4, found in Melia azedarach (Chinaberry tree).